A 118-amino-acid polypeptide reads, in one-letter code: Myotrophin (118 aa).

ANK repeat units lie at residues 1 to 30 (MGDK…DVNR), 34 to 65 (GGRK…NAPD), and 67 to 98 (HGIT…NRKG).

Belongs to the myotrophin family.

It localises to the cytoplasm. It is found in the nucleus. The protein resides in the perinuclear region. Its function is as follows. Regulates NF-kappa-B transcription factor activity. Promotes growth of cardiomyocytes, but not cardiomyocyte proliferation. Promotes cardiac muscle hypertrophy. Plays a role in the regulation of the growth of actin filaments. Inhibits the activity of the F-actin-capping protein complex. This is Myotrophin (mtpn) from Danio rerio (Zebrafish).